A 293-amino-acid chain; its full sequence is SAGA-associated factor 29 (293 aa).

Positions 3–88 (LVSADSRIAE…KALDKIAEIK (86 aa)) form a coiled coil. The SGF29 C-terminal domain occupies 152–293 (GDYVARPGDK…VVACKEPKKK (142 aa)). Histone H3K4me3 N-terminus binding regions lie at residues 194 to 196 (DID) and 240 to 243 (QTTC). A histone H3K4me3 binding region spans residues 264–266 (FED). Lys-288 is subject to N6-acetyllysine.

Belongs to the SGF29 family. Interacts with dimethylated and trimethylated 'Lys-4' of histone H3 (H3K4me2 and H3K4me3), with a preference for the trimethylated form (H3K4me3). Component of some SAGA-type complexes. Component of the ADA2A-containing complex (ATAC), composed of KAT14, KAT2A, TADA2L, TADA3L, ZZ3, MBIP, WDR5, YEATS2, CCDC101 and DR1. Interacts with (methylated) CGAS. Interacts with TADA3L, GCN5L2, SUPT3H and MYC.

It is found in the nucleus. Its function is as follows. Chromatin reader component of some histone acetyltransferase (HAT) SAGA-type complexes like the TFTC-HAT, ATAC or STAGA complexes. SGF29 specifically recognizes and binds methylated 'Lys-4' of histone H3 (H3K4me), with a preference for trimethylated form (H3K4me3). In the SAGA-type complexes, SGF29 is required to recruit complexes to H3K4me. Involved in the response to endoplasmic reticulum (ER) stress by recruiting the SAGA complex to H3K4me, thereby promoting histone H3 acetylation and cell survival. Also binds non-histone proteins that are methylated on Lys residues: specifically recognizes and binds CGAS monomethylated on 'Lys-506'. This Homo sapiens (Human) protein is SAGA-associated factor 29.